The sequence spans 727 residues: Translation initiation factor IF-2, mitochondrial (727 aa).

The N-terminal 29 residues, 1 to 29 (MNQKLLKLENLLRFHTICRQVHSPSQRRL), are a transit peptide targeting the mitochondrion. A tr-type G domain is found at 178-346 (PRSPVVTVMG…ATIALAEILE (169 aa)). The G1 stretch occupies residues 187–194 (GHVDHGKT). 187–194 (GHVDHGKT) contributes to the GTP binding site. The G2 stretch occupies residues 212–216 (GITQH). Residues 234 to 237 (DTPG) and 288 to 291 (NKCD) contribute to the GTP site. A G3 region spans residues 234–237 (DTPG). The segment at 288–291 (NKCD) is G4. The G5 stretch occupies residues 324–326 (SAL). Residue Thr688 is modified to Phosphothreonine.

The protein belongs to the TRAFAC class translation factor GTPase superfamily. Classic translation factor GTPase family. IF-2 subfamily. As to quaternary structure, monomer.

The protein localises to the mitochondrion. Its function is as follows. One of the essential components for the initiation of protein synthesis. Protects formylmethionyl-tRNA from spontaneous hydrolysis and promotes its binding to the 30S ribosomal subunits. Also involved in the hydrolysis of GTP during the formation of the 70S ribosomal complex. This is Translation initiation factor IF-2, mitochondrial (Mtif2) from Mus musculus (Mouse).